Here is a 111-residue protein sequence, read N- to C-terminus: Disintegrin subunit alpha (111 aa).

A signal peptide spans 1–20 (MIQVLLVTICLAVFPYQGSS). A propeptide spanning residues 21–44 (IILESGNVNDYEVVYPRKITPLPK) is cleaved from the precursor. Residues 45-111 (GAVQPKNPCC…GDCPRKHFYA (67 aa)) enclose the Disintegrin domain. Disulfide bonds link Cys53/Cys76, Cys67/Cys73, Cys72/Cys97, and Cys85/Cys104. The Cell attachment site signature appears at 89-91 (RGD). The propeptide occupies 110–111 (YA).

The protein belongs to the disintegrin family. Dimeric disintegrin subfamily. Heterodimer with subunit beta; disulfide-linked. In terms of tissue distribution, expressed by the venom gland.

The protein localises to the secreted. In terms of biological role, acts by binding to alpha-IIb/beta-3 (ITGA2B/ITGB3) on the platelet surface and inhibits both ADP-induced platelet aggregation and platelet aggregate dissociation in human platelet-rich plasma. This chain is Disintegrin subunit alpha, found in Agkistrodon piscivorus leucostoma (Western cottonmouth).